Here is a 318-residue protein sequence, read N- to C-terminus: Pheromone-regulated membrane protein 5 (318 aa).

A helical membrane pass occupies residues phenylalanine 78–isoleucine 98. Serine 129 bears the Phosphoserine mark. Residues threonine 238–leucine 247 are compositionally biased toward low complexity. The disordered stretch occupies residues threonine 238–glutamate 318. Residues glycine 250–lysine 261 show a composition bias toward basic and acidic residues. Over residues serine 276–arginine 285 the composition is skewed to polar residues. 3 positions are modified to phosphoserine: serine 279, serine 282, and serine 288. Residues histidine 309 to glutamate 318 show a composition bias toward basic and acidic residues. Residue lysine 314 forms a Glycyl lysine isopeptide (Lys-Gly) (interchain with G-Cter in ubiquitin) linkage.

Belongs to the PRM5 family.

Its subcellular location is the membrane. This is Pheromone-regulated membrane protein 5 (PRM5) from Saccharomyces cerevisiae (strain Lalvin EC1118 / Prise de mousse) (Baker's yeast).